Consider the following 95-residue polypeptide: Large ribosomal subunit protein bL25 (95 aa).

The protein belongs to the bacterial ribosomal protein bL25 family. In terms of assembly, part of the 50S ribosomal subunit; part of the 5S rRNA/L5/L18/L25 subcomplex. Contacts the 5S rRNA. Binds to the 5S rRNA independently of L5 and L18.

In terms of biological role, this is one of the proteins that binds to the 5S RNA in the ribosome where it forms part of the central protuberance. This is Large ribosomal subunit protein bL25 from Shewanella amazonensis (strain ATCC BAA-1098 / SB2B).